A 173-amino-acid polypeptide reads, in one-letter code: Large ribosomal subunit protein uL10 (173 aa).

Belongs to the universal ribosomal protein uL10 family. Part of the ribosomal stalk of the 50S ribosomal subunit. The N-terminus interacts with L11 and the large rRNA to form the base of the stalk. The C-terminus forms an elongated spine to which L12 dimers bind in a sequential fashion forming a multimeric L10(L12)X complex.

Forms part of the ribosomal stalk, playing a central role in the interaction of the ribosome with GTP-bound translation factors. This is Large ribosomal subunit protein uL10 from Cupriavidus pinatubonensis (strain JMP 134 / LMG 1197) (Cupriavidus necator (strain JMP 134)).